Consider the following 238-residue polypeptide: Flagellar L-ring protein (238 aa).

The first 23 residues, 1–23, serve as a signal peptide directing secretion; the sequence is MIKLFICQKKYYLTAIFLLTIQS. Residue Cys-24 is the site of N-palmitoyl cysteine attachment. Residue Cys-24 is the site of S-diacylglycerol cysteine attachment.

This sequence belongs to the FlgH family. In terms of assembly, the basal body constitutes a major portion of the flagellar organelle and consists of four rings (L,P,S, and M) mounted on a central rod.

The protein localises to the cell outer membrane. Its subcellular location is the bacterial flagellum basal body. Functionally, assembles around the rod to form the L-ring and probably protects the motor/basal body from shearing forces during rotation. The polypeptide is Flagellar L-ring protein (Buchnera aphidicola subsp. Acyrthosiphon pisum (strain 5A)).